Reading from the N-terminus, the 602-residue chain is MFRSCLRHCRRATVRSRTCPRCSHHEIPQLQVVQRQISLSSSFPHIRRLQTSSTDTQERIPIRKQLKQEAKAIKSRKRERREQEEASRHKWELTVGVEIHAQLNTETKLFSRAPTSPSELPNTNVALFDLAFPGSQPEFQVATLLPALRAAIALNCDIQPVSRFDRKHYFYQDQPSGYQITQYYEPFARNGYLDLFRHDGIAPEDGDRVRIGIKQIQLEQDTAKSQEYPPSMQLLDFNRVSHPLIEIITMPEIHTPATAAAFVRKVQAILQSCSAVTTGMEAGGLRADINVSVRLRGDGSGTHQYSGIGGLGQRTEIKNLSSFKAVEDAIIAEKNRQIAVLESGGVVEGETRGWTIGSTETRKLRGKEGEVDYRYMPDPDIPPLLIGKDIISALSNTLPAGPDALIDMLVGQYGLAIEDAKPLVELEDGARLEYYQDVVDILRNLQQDLDSKTQAGLGRVAGNWVLHELGGLLSKAGLAWDAERVTAESLAALIDQLQRKRITGATAKKVLAMLFDGDRRPVAQLLEEENLILRPLSREEYIALASAAIELNPQMVEQIRSKNQLGKLGWFVGQMMRMGEKGRVEAQKADAILRELILGLSQ.

The N-terminal 56 residues, 1–56 (MFRSCLRHCRRATVRSRTCPRCSHHEIPQLQVVQRQISLSSSFPHIRRLQTSSTDT), are a transit peptide targeting the mitochondrion.

It belongs to the GatB/GatE family. GatB subfamily. In terms of assembly, subunit of the heterotrimeric GatCAB amidotransferase (AdT) complex, composed of A, B and C subunits.

Its subcellular location is the mitochondrion. It carries out the reaction L-glutamyl-tRNA(Gln) + L-glutamine + ATP + H2O = L-glutaminyl-tRNA(Gln) + L-glutamate + ADP + phosphate + H(+). Allows the formation of correctly charged Gln-tRNA(Gln) through the transamidation of misacylated Glu-tRNA(Gln) in the mitochondria. The reaction takes place in the presence of glutamine and ATP through an activated gamma-phospho-Glu-tRNA(Gln). This chain is Glutamyl-tRNA(Gln) amidotransferase subunit B, mitochondrial (nempA), found in Emericella nidulans (strain FGSC A4 / ATCC 38163 / CBS 112.46 / NRRL 194 / M139) (Aspergillus nidulans).